Here is a 269-residue protein sequence, read N- to C-terminus: Formamidopyrimidine-DNA glycosylase (269 aa).

The Schiff-base intermediate with DNA role is filled by P2. The active-site Proton donor is the E3. The active-site Proton donor; for beta-elimination activity is K57. The DNA site is built by H90, R109, and K150. The FPG-type zinc-finger motif lies at 235 to 269 (RVYGRNGEPCRTCGTPIETAKHGQRSTFFCRRCQV). Catalysis depends on R259, which acts as the Proton donor; for delta-elimination activity.

It belongs to the FPG family. Monomer. Zn(2+) is required as a cofactor.

The enzyme catalyses Hydrolysis of DNA containing ring-opened 7-methylguanine residues, releasing 2,6-diamino-4-hydroxy-5-(N-methyl)formamidopyrimidine.. It catalyses the reaction 2'-deoxyribonucleotide-(2'-deoxyribose 5'-phosphate)-2'-deoxyribonucleotide-DNA = a 3'-end 2'-deoxyribonucleotide-(2,3-dehydro-2,3-deoxyribose 5'-phosphate)-DNA + a 5'-end 5'-phospho-2'-deoxyribonucleoside-DNA + H(+). Its function is as follows. Involved in base excision repair of DNA damaged by oxidation or by mutagenic agents. Acts as a DNA glycosylase that recognizes and removes damaged bases. Has a preference for oxidized purines, such as 7,8-dihydro-8-oxoguanine (8-oxoG). Has AP (apurinic/apyrimidinic) lyase activity and introduces nicks in the DNA strand. Cleaves the DNA backbone by beta-delta elimination to generate a single-strand break at the site of the removed base with both 3'- and 5'-phosphates. The sequence is that of Formamidopyrimidine-DNA glycosylase from Pectobacterium atrosepticum (strain SCRI 1043 / ATCC BAA-672) (Erwinia carotovora subsp. atroseptica).